The primary structure comprises 473 residues: Maltose fermentation regulatory protein MAL63 (473 aa).

A DNA-binding region (zn(2)-C6 fungal-type) is located at residues 8–34 (CDCCRVRRVKCDRNKPCNRCIQRNLNC). Positions 41–49 (KKRGPKSIR) match the Nuclear localization signal motif.

Belongs to the MAL13 family.

Its subcellular location is the nucleus. Regulates the coordinate transcription of structural MAL6S (maltase) and MAL6T (maltose permease) genes. The sequence is that of Maltose fermentation regulatory protein MAL63 (MAL63) from Saccharomyces cerevisiae (Baker's yeast).